The primary structure comprises 83 residues: Transmembrane protein EP84R (83 aa).

Helical transmembrane passes span 31–51 (VIGIILLVISLLLIFIGIIIL) and 59–79 (AGSVLVVLSLILGGGGFFLIY).

Belongs to the asfivirus EP84R family.

It is found in the virion membrane. This chain is Transmembrane protein EP84R, found in Ornithodoros (relapsing fever ticks).